Here is a 413-residue protein sequence, read N- to C-terminus: Phosphopentomutase (413 aa).

Positions 11, 306, 311, 347, 348, and 359 each coordinate Mn(2+).

The protein belongs to the phosphopentomutase family. Requires Mn(2+) as cofactor.

It localises to the cytoplasm. It catalyses the reaction 2-deoxy-alpha-D-ribose 1-phosphate = 2-deoxy-D-ribose 5-phosphate. The enzyme catalyses alpha-D-ribose 1-phosphate = D-ribose 5-phosphate. The protein operates within carbohydrate degradation; 2-deoxy-D-ribose 1-phosphate degradation; D-glyceraldehyde 3-phosphate and acetaldehyde from 2-deoxy-alpha-D-ribose 1-phosphate: step 1/2. Isomerase that catalyzes the conversion of deoxy-ribose 1-phosphate (dRib-1-P) and ribose 1-phosphate (Rib-1-P) to deoxy-ribose 5-phosphate (dRib-5-P) and ribose 5-phosphate (Rib-5-P), respectively. This Helicobacter pylori (strain ATCC 700392 / 26695) (Campylobacter pylori) protein is Phosphopentomutase.